Reading from the N-terminus, the 279-residue chain is Acetylglutamate kinase (279 aa).

Residues 64–65, Arg86, and Asn177 each bind substrate; that span reads GG.

The protein belongs to the acetylglutamate kinase family. ArgB subfamily.

The protein localises to the cytoplasm. It catalyses the reaction N-acetyl-L-glutamate + ATP = N-acetyl-L-glutamyl 5-phosphate + ADP. It participates in amino-acid biosynthesis; L-arginine biosynthesis; N(2)-acetyl-L-ornithine from L-glutamate: step 2/4. Its function is as follows. Catalyzes the ATP-dependent phosphorylation of N-acetyl-L-glutamate. The sequence is that of Acetylglutamate kinase from Campylobacter jejuni (strain RM1221).